Here is a 405-residue protein sequence, read N- to C-terminus: Cytochrome P450 107B1 (405 aa).

Heme is bound at residue Cys352.

The protein belongs to the cytochrome P450 family. Heme is required as a cofactor.

The protein resides in the cytoplasm. In terms of biological role, not known, probably involved in the catabolism of octane and guaiacol. It displays a weak activity in the O-dealkylation of 7-ethoxycoumarin. In Saccharopolyspora erythraea (strain ATCC 11635 / DSM 40517 / JCM 4748 / NBRC 13426 / NCIMB 8594 / NRRL 2338), this protein is Cytochrome P450 107B1 (cyp107B1).